The chain runs to 261 residues: ATP synthase subunit a (261 aa).

A run of 6 helical transmembrane segments spans residues 45 to 65, 107 to 127, 133 to 153, 162 to 182, 209 to 229, and 232 to 252; these read ITNV…ILVL, VMTL…PLSF, MAVT…LGFM, MFWV…IEVI, IAGF…VTAI, and LELL…CVYL.

Belongs to the ATPase A chain family. As to quaternary structure, F-type ATPases have 2 components, CF(1) - the catalytic core - and CF(0) - the membrane proton channel. CF(1) has five subunits: alpha(3), beta(3), gamma(1), delta(1), epsilon(1). CF(0) has four main subunits: a, b, b' and c.

It localises to the cell inner membrane. In terms of biological role, key component of the proton channel; it plays a direct role in the translocation of protons across the membrane. The chain is ATP synthase subunit a from Cereibacter sphaeroides (strain ATCC 17025 / ATH 2.4.3) (Rhodobacter sphaeroides).